The following is a 143-amino-acid chain: MAKKVTAYVKLQVAAGKANPSPPVGPALGQHGVNIMEFCKAFNAQTQGMEVGAPVPVIISVYSDRSFTFVMKTPPASFLLKKAAGITSGSGRPNTNKVGKVNRAQLEAIATTKLPDLTAADMDAAVRTIAGSARSMGLDVEGV.

This sequence belongs to the universal ribosomal protein uL11 family. As to quaternary structure, part of the ribosomal stalk of the 50S ribosomal subunit. Interacts with L10 and the large rRNA to form the base of the stalk. L10 forms an elongated spine to which L12 dimers bind in a sequential fashion forming a multimeric L10(L12)X complex. Post-translationally, one or more lysine residues are methylated.

Its function is as follows. Forms part of the ribosomal stalk which helps the ribosome interact with GTP-bound translation factors. The chain is Large ribosomal subunit protein uL11 from Cellvibrio japonicus (strain Ueda107) (Pseudomonas fluorescens subsp. cellulosa).